A 388-amino-acid polypeptide reads, in one-letter code: S-adenosylmethionine synthase (388 aa).

Histidine 14 contacts ATP. Aspartate 16 serves as a coordination point for Mg(2+). A K(+)-binding site is contributed by glutamate 42. L-methionine is bound by residues glutamate 55 and glutamine 98. Residues 98 to 108 (QSAEISSAVDQ) form a flexible loop region. ATP contacts are provided by residues 166–168 (DGK), aspartate 242, 248–249 (RK), alanine 265, and lysine 269. Aspartate 242 provides a ligand contact to L-methionine. Lysine 273 provides a ligand contact to L-methionine.

Belongs to the AdoMet synthase family. As to quaternary structure, homotetramer; dimer of dimers. The cofactor is Mg(2+). Requires K(+) as cofactor.

The protein resides in the cytoplasm. The enzyme catalyses L-methionine + ATP + H2O = S-adenosyl-L-methionine + phosphate + diphosphate. The protein operates within amino-acid biosynthesis; S-adenosyl-L-methionine biosynthesis; S-adenosyl-L-methionine from L-methionine: step 1/1. Functionally, catalyzes the formation of S-adenosylmethionine (AdoMet) from methionine and ATP. The overall synthetic reaction is composed of two sequential steps, AdoMet formation and the subsequent tripolyphosphate hydrolysis which occurs prior to release of AdoMet from the enzyme. In Oenococcus oeni (strain ATCC BAA-331 / PSU-1), this protein is S-adenosylmethionine synthase.